The chain runs to 134 residues: D-ribose pyranase (134 aa).

H20 serves as the catalytic Proton donor. Residues D28, H101, and 123-125 (YSN) each bind substrate.

Belongs to the RbsD / FucU family. RbsD subfamily. Homodecamer.

Its subcellular location is the cytoplasm. It carries out the reaction beta-D-ribopyranose = beta-D-ribofuranose. Its pathway is carbohydrate metabolism; D-ribose degradation; D-ribose 5-phosphate from beta-D-ribopyranose: step 1/2. In terms of biological role, catalyzes the interconversion of beta-pyran and beta-furan forms of D-ribose. This Pseudomonas syringae pv. syringae (strain B728a) protein is D-ribose pyranase.